The following is a 222-amino-acid chain: GTP cyclohydrolase 1 (222 aa).

Zn(2+) contacts are provided by cysteine 111, histidine 114, and cysteine 182.

The protein belongs to the GTP cyclohydrolase I family. As to quaternary structure, homomer.

It carries out the reaction GTP + H2O = 7,8-dihydroneopterin 3'-triphosphate + formate + H(+). It participates in cofactor biosynthesis; 7,8-dihydroneopterin triphosphate biosynthesis; 7,8-dihydroneopterin triphosphate from GTP: step 1/1. This chain is GTP cyclohydrolase 1, found in Klebsiella pneumoniae (strain 342).